A 508-amino-acid chain; its full sequence is Cobalamin biosynthesis protein CobIJ (508 aa).

The precorrin-2 C20-methyltransferase stretch occupies residues 1-243; the sequence is MSARGTLWGV…AMLPGGRRRA (243 aa). Positions 244–508 are precorrin-3 methylase; the sequence is LLTGTVAVVG…TATKSSRHSD (265 aa). Residues 489–508 form a disordered region; the sequence is PRRYPEAGRATATKSSRHSD.

This sequence belongs to the precorrin methyltransferase family.

The catalysed reaction is precorrin-2 + S-adenosyl-L-methionine = precorrin-3A + S-adenosyl-L-homocysteine + H(+). The enzyme catalyses precorrin-3B + S-adenosyl-L-methionine = precorrin-4 + S-adenosyl-L-homocysteine + 3 H(+). Its pathway is cofactor biosynthesis; adenosylcobalamin biosynthesis; cob(II)yrinate a,c-diamide from precorrin-2 (aerobic route): step 1/10. The protein operates within cofactor biosynthesis; adenosylcobalamin biosynthesis; cob(II)yrinate a,c-diamide from precorrin-2 (aerobic route): step 3/10. Methylates precorrin-2 at the C-20 position to produce precorrin-3A. The sequence is that of Cobalamin biosynthesis protein CobIJ (cobIJ) from Mycobacterium bovis (strain ATCC BAA-935 / AF2122/97).